The following is a 354-amino-acid chain: Peptide chain release factor 1 (354 aa).

N5-methylglutamine is present on glutamine 230.

This sequence belongs to the prokaryotic/mitochondrial release factor family. Post-translationally, methylated by PrmC. Methylation increases the termination efficiency of RF1.

Its subcellular location is the cytoplasm. In terms of biological role, peptide chain release factor 1 directs the termination of translation in response to the peptide chain termination codons UAG and UAA. The chain is Peptide chain release factor 1 from Thermus thermophilus (strain ATCC BAA-163 / DSM 7039 / HB27).